Here is a 388-residue protein sequence, read N- to C-terminus: Sulfate adenylyltransferase (388 aa).

This sequence belongs to the sulfate adenylyltransferase family.

The enzyme catalyses sulfate + ATP + H(+) = adenosine 5'-phosphosulfate + diphosphate. It functions in the pathway sulfur metabolism; hydrogen sulfide biosynthesis; sulfite from sulfate: step 1/3. The sequence is that of Sulfate adenylyltransferase from Acaryochloris marina (strain MBIC 11017).